The primary structure comprises 334 residues: Cytosolic Fe-S cluster assembly factor NUBP1 homolog (334 aa).

The interval methionine 1 to serine 24 is disordered. Residues cysteine 19, cysteine 33, cysteine 36, and cysteine 42 each coordinate [4Fe-4S] cluster. An ATP-binding site is contributed by glycine 72–serine 79. 2 residues coordinate [4Fe-4S] cluster: cysteine 247 and cysteine 250.

It belongs to the Mrp/NBP35 ATP-binding proteins family. NUBP1/NBP35 subfamily. Heterotetramer of 2 NUBP1 and 2 NUBP2 chains. [4Fe-4S] cluster is required as a cofactor.

Its subcellular location is the cytoplasm. Component of the cytosolic iron-sulfur (Fe/S) protein assembly (CIA) machinery. Required for maturation of extramitochondrial Fe-S proteins. The NUBP1-NUBP2 heterotetramer forms a Fe-S scaffold complex, mediating the de novo assembly of an Fe-S cluster and its transfer to target apoproteins. The sequence is that of Cytosolic Fe-S cluster assembly factor NUBP1 homolog from Culex quinquefasciatus (Southern house mosquito).